We begin with the raw amino-acid sequence, 137 residues long: Small ribosomal subunit protein uS11 (137 aa).

The span at 1 to 11 shows a compositional bias: polar residues; the sequence is MPPKSRSTGPK. Disordered regions lie at residues 1-28 and 117-137; these read MPPK…PHGA and TISD…RRRV. Over residues 12–21 the composition is skewed to basic residues; it reads KTQKARRRDK.

Belongs to the universal ribosomal protein uS11 family. As to quaternary structure, part of the 30S ribosomal subunit. Interacts with proteins S7 and S18. Binds to IF-3.

Located on the platform of the 30S subunit, it bridges several disparate RNA helices of the 16S rRNA. Forms part of the Shine-Dalgarno cleft in the 70S ribosome. The protein is Small ribosomal subunit protein uS11 of Rhodococcus opacus (strain B4).